The following is a 903-amino-acid chain: Valine--tRNA ligase (903 aa).

Over residues 1–15 the composition is skewed to polar residues; the sequence is MVCVTDQNNETTSQN. Residues 1–21 form a disordered region; the sequence is MVCVTDQNNETTSQNRADKLP. Residues 61–71 carry the 'HIGH' region motif; sequence PNVTGQLHMGH. Residues 552-556 carry the 'KMSKS' region motif; sequence KMSKS. Lysine 555 provides a ligand contact to ATP. Residues 836–903 adopt a coiled-coil conformation; sequence TVDVAAERKR…RINKRLEELA (68 aa).

The protein belongs to the class-I aminoacyl-tRNA synthetase family. ValS type 1 subfamily. Monomer.

The protein resides in the cytoplasm. The catalysed reaction is tRNA(Val) + L-valine + ATP = L-valyl-tRNA(Val) + AMP + diphosphate. Catalyzes the attachment of valine to tRNA(Val). As ValRS can inadvertently accommodate and process structurally similar amino acids such as threonine, to avoid such errors, it has a 'posttransfer' editing activity that hydrolyzes mischarged Thr-tRNA(Val) in a tRNA-dependent manner. This is Valine--tRNA ligase from Corynebacterium glutamicum (strain ATCC 13032 / DSM 20300 / JCM 1318 / BCRC 11384 / CCUG 27702 / LMG 3730 / NBRC 12168 / NCIMB 10025 / NRRL B-2784 / 534).